A 146-amino-acid chain; its full sequence is Large ribosomal subunit protein eL28 (146 aa).

The tract at residues 123 to 146 (VRAARKERSSKITFQRKAVRPKRH) is disordered.

It belongs to the eukaryotic ribosomal protein eL28 family.

The protein is Large ribosomal subunit protein eL28 of Trypanosoma cruzi.